We begin with the raw amino-acid sequence, 210 residues long: MQNKIQGVYLVTDRPLCLHHKLEEVVQMAASGGVSLVQLREKDSTSREFLELAIHLKFILSPFQVPLLINDRVDLCLASGADGVHLGQTDLPWLEARRILGKDAIIGLSIETKEDFATLTKEDPNPQLEYLAVSPVFDTPTKTNTKEALGLAGVRWLKEKTDIPVVAIGGINISNAKDVIGAGADMIAVVSAICSAKNPKEATVALRNQF.

4-amino-2-methyl-5-(diphosphooxymethyl)pyrimidine-binding positions include 38-42 and Asn70; that span reads QLREK. Positions 71 and 90 each coordinate Mg(2+). 4-amino-2-methyl-5-(diphosphooxymethyl)pyrimidine is bound at residue Ser109. A 2-[(2R,5Z)-2-carboxy-4-methylthiazol-5(2H)-ylidene]ethyl phosphate-binding site is contributed by 139–141; sequence TPT. Lys142 is a binding site for 4-amino-2-methyl-5-(diphosphooxymethyl)pyrimidine. 2-[(2R,5Z)-2-carboxy-4-methylthiazol-5(2H)-ylidene]ethyl phosphate is bound by residues Gly170 and 190–191; that span reads VS.

Belongs to the thiamine-phosphate synthase family. Mg(2+) is required as a cofactor.

It carries out the reaction 2-[(2R,5Z)-2-carboxy-4-methylthiazol-5(2H)-ylidene]ethyl phosphate + 4-amino-2-methyl-5-(diphosphooxymethyl)pyrimidine + 2 H(+) = thiamine phosphate + CO2 + diphosphate. It catalyses the reaction 2-(2-carboxy-4-methylthiazol-5-yl)ethyl phosphate + 4-amino-2-methyl-5-(diphosphooxymethyl)pyrimidine + 2 H(+) = thiamine phosphate + CO2 + diphosphate. The enzyme catalyses 4-methyl-5-(2-phosphooxyethyl)-thiazole + 4-amino-2-methyl-5-(diphosphooxymethyl)pyrimidine + H(+) = thiamine phosphate + diphosphate. It functions in the pathway cofactor biosynthesis; thiamine diphosphate biosynthesis; thiamine phosphate from 4-amino-2-methyl-5-diphosphomethylpyrimidine and 4-methyl-5-(2-phosphoethyl)-thiazole: step 1/1. In terms of biological role, condenses 4-methyl-5-(beta-hydroxyethyl)thiazole monophosphate (THZ-P) and 2-methyl-4-amino-5-hydroxymethyl pyrimidine pyrophosphate (HMP-PP) to form thiamine monophosphate (TMP). This Leptospira biflexa serovar Patoc (strain Patoc 1 / Ames) protein is Thiamine-phosphate synthase.